Here is an 852-residue protein sequence, read N- to C-terminus: Envelope glycoprotein gp160 (852 aa).

An N-terminal signal peptide occupies residues 1–31 (MRARETRKNYQCLWRWGTMLLGMLMICSAAE). Over 32–680 (NLWVTVYYGV…ITNWLWYIRI (649 aa)) the chain is Extracellular. A disulfide bond links C53 and C73. N87, N129, N136, N141, N142, N155, N159, N189, and N198 each carry an N-linked (GlcNAc...) asparagine; by host glycan. Cystine bridges form between C118–C206, C125–C197, C130–C156, C219–C248, and C229–C240. The interval 130 to 155 (CTDYLGNATNTNNSSGGTVEKEEIKN) is V1. Residues 156-197 (CSFNITTGIRDKVQKAYAYFYKLDVVPIDDDNTNTSYRLIHC) are V2. N-linked (GlcNAc...) asparagine; by host glycosylation is found at N242, N263, N277, N290, and N296. Residues 297-330 (CTRPNNNRRRRITSGPGKVLYTTGEIIGDIRKAY) are V3. A disulfide bridge connects residues C297 and C331. 3 N-linked (GlcNAc...) asparagine; by host glycosylation sites follow: N332, N339, and N355. Positions 363 to 373 (SSGGDPEIVMH) are CD4-binding loop. Cystine bridges form between C377–C439 and C384–C412. The V4 stretch occupies residues 384–412 (CNTTKLFNSTWNENSTWNATGNDTITLPC). 7 N-linked (GlcNAc...) asparagine; by host glycosylation sites follow: N385, N391, N397, N401, N405, N442, and N457. 2 V5 regions span residues 455–466 (DKNSTTEIFRPA) and 457–466 (NSTTEIFRPA). Positions 507-528 (AVGVIGAMFLGFLGAAGSTMGA) are fusion peptide. The interval 570–588 (KQLQARVLAVERYLRDQQL) is immunosuppression. Cysteines 594 and 600 form a disulfide. Residues N607, N612, N621, and N633 are each glycosylated (N-linked (GlcNAc...) asparagine; by host). The stretch at 629 to 663 (REIDNYTSLIYTLLEESQNQQEKNEQELLELDKWA) forms a coiled coil. Residues 658–679 (ELDKWASLWNWFSITNWLWYIR) form an MPER; binding to GalCer region. A helical membrane pass occupies residues 681–701 (FIMIVGGLIGLRIIFAVLSIV). At 702-852 (NRVRQGYSPL…IRQGFERALL (151 aa)) the chain is on the cytoplasmic side. The short motif at 708-711 (YSPL) is the YXXL motif; contains endocytosis signal element. Positions 717–739 (IPAQRGPDRPEGIEEGGGERDRD) are disordered. Over residues 722–739 (GPDRPEGIEEGGGERDRD) the composition is skewed to basic and acidic residues. A lipid anchor (S-palmitoyl cysteine; by host) is attached at C760. The Di-leucine internalization motif signature appears at 851–852 (LL).

This sequence belongs to the HIV-1 env protein family. The mature envelope protein (Env) consists of a homotrimer of non-covalently associated gp120-gp41 heterodimers. The resulting complex protrudes from the virus surface as a spike. There seems to be as few as 10 spikes on the average virion. Interacts with host CD4, CCR5 and CXCR4. Gp120 also interacts with the C-type lectins CD209/DC-SIGN and CLEC4M/DC-SIGNR (collectively referred to as DC-SIGN(R)). Gp120 and gp41 interact with GalCer. Gp120 interacts with host ITGA4/ITGB7 complex; on CD4+ T-cells, this interaction results in rapid activation of integrin ITGAL/LFA-1, which facilitates efficient cell-to-cell spreading of HIV-1. Gp120 interacts with cell-associated heparan sulfate; this interaction increases virus infectivity on permissive cells and may be involved in infection of CD4- cells. In terms of assembly, the mature envelope protein (Env) consists of a homotrimer of non-covalently associated gp120-gp41 heterodimers. The resulting complex protrudes from the virus surface as a spike. There seems to be as few as 10 spikes on the average virion. Highly glycosylated by host. The high number of glycan on the protein is reffered to as 'glycan shield' because it contributes to hide protein sequence from adaptive immune system. In terms of processing, palmitoylation of the transmembrane protein and of Env polyprotein (prior to its proteolytic cleavage) is essential for their association with host cell membrane lipid rafts. Palmitoylation is therefore required for envelope trafficking to classical lipid rafts, but not for viral replication. Post-translationally, specific enzymatic cleavages in vivo yield mature proteins. Envelope glycoproteins are synthesized as an inactive precursor that is heavily N-glycosylated and processed likely by host cell furin in the Golgi to yield the mature SU and TM proteins. The cleavage site between SU and TM requires the minimal sequence [KR]-X-[KR]-R. About 2 of the 9 disulfide bonds of gp41 are reduced by P4HB/PDI, following binding to CD4 receptor.

It localises to the virion membrane. The protein localises to the host cell membrane. It is found in the host endosome membrane. In terms of biological role, oligomerizes in the host endoplasmic reticulum into predominantly trimers. In a second time, gp160 transits in the host Golgi, where glycosylation is completed. The precursor is then proteolytically cleaved in the trans-Golgi and thereby activated by cellular furin or furin-like proteases to produce gp120 and gp41. Its function is as follows. Attaches the virus to the host lymphoid cell by binding to the primary receptor CD4. This interaction induces a structural rearrangement creating a high affinity binding site for a chemokine coreceptor like CXCR4 and/or CCR5. Acts as a ligand for CD209/DC-SIGN and CLEC4M/DC-SIGNR, which are respectively found on dendritic cells (DCs), and on endothelial cells of liver sinusoids and lymph node sinuses. These interactions allow capture of viral particles at mucosal surfaces by these cells and subsequent transmission to permissive cells. HIV subverts the migration properties of dendritic cells to gain access to CD4+ T-cells in lymph nodes. Virus transmission to permissive T-cells occurs either in trans (without DCs infection, through viral capture and transmission), or in cis (following DCs productive infection, through the usual CD4-gp120 interaction), thereby inducing a robust infection. In trans infection, bound virions remain infectious over days and it is proposed that they are not degraded, but protected in non-lysosomal acidic organelles within the DCs close to the cell membrane thus contributing to the viral infectious potential during DCs' migration from the periphery to the lymphoid tissues. On arrival at lymphoid tissues, intact virions recycle back to DCs' cell surface allowing virus transmission to CD4+ T-cells. Functionally, acts as a class I viral fusion protein. Under the current model, the protein has at least 3 conformational states: pre-fusion native state, pre-hairpin intermediate state, and post-fusion hairpin state. During fusion of viral and target intracellular membranes, the coiled coil regions (heptad repeats) assume a trimer-of-hairpins structure, positioning the fusion peptide in close proximity to the C-terminal region of the ectodomain. The formation of this structure appears to drive apposition and subsequent fusion of viral and target cell membranes. Complete fusion occurs in host cell endosomes and is dynamin-dependent, however some lipid transfer might occur at the plasma membrane. The virus undergoes clathrin-dependent internalization long before endosomal fusion, thus minimizing the surface exposure of conserved viral epitopes during fusion and reducing the efficacy of inhibitors targeting these epitopes. Membranes fusion leads to delivery of the nucleocapsid into the cytoplasm. The protein is Envelope glycoprotein gp160 of Human immunodeficiency virus type 1 group M subtype B (isolate SF33) (HIV-1).